Reading from the N-terminus, the 520-residue chain is Fumarate hydratase, mitochondrial (520 aa).

A mitochondrion-targeting transit peptide spans 1–39; it reads MASVAHISTAKAIFRAGGLPCRRLITPTLTGLPLKTHRM. Substrate is bound by residues 153–155, 184–187, 194–196, and threonine 242; these read SGT, HPND, and SSN. The Proton donor/acceptor role is filled by histidine 243. Serine 373 is an active-site residue. Residues serine 374 and 379–381 contribute to the substrate site; that span reads KVN.

The protein belongs to the class-II fumarase/aspartase family. Fumarase subfamily. As to quaternary structure, homotetramer.

The protein resides in the mitochondrion matrix. It localises to the cytoplasm. It is found in the nucleus. The enzyme catalyses (S)-malate = fumarate + H2O. The protein operates within carbohydrate metabolism; tricarboxylic acid cycle; (S)-malate from fumarate: step 1/1. Functionally, catalyzes the reversible stereospecific interconversion of fumarate to L-malate. In mitochondrion, catalyzes the hydration of fumarate to L-malate in the tricarboxylic acid (TCA) cycle to facilitate a transition step in the production of energy in the form of NADH. In cytoplasm and nucleus, involved in DNA repair in response to DNA damage: following DNA double-strand breaks (DSBs), translocates from the cytosol to the nucleus and promotes DNA repair by catalyzing the dehydration of L-malate to fumarate. The protein is Fumarate hydratase, mitochondrial (fum1) of Schizosaccharomyces pombe (strain 972 / ATCC 24843) (Fission yeast).